We begin with the raw amino-acid sequence, 638 residues long: Stress-activated protein kinase alpha (638 aa).

6 ANK repeats span residues 43–72 (YGQSALTIALKNNNEEMVELLLSLCVTLKA), 80–109 (NGFSALHQAVSSDDRILMRVLQYENINVDV), 113–146 (DLNTPIHYFCQKFRSPNCQEPFQLFIQKGVNVNA), 150–181 (NGETPLHKAIFNNSVRLMMVGLLLKNGANVNL), 185–214 (FQESPLHYAVRLGREDLVSVLLKAGADVDC), and 219–248 (ERKTPYQLAVEEGNKDMTARIKKYKDLFDW). In terms of domain architecture, SAM spans 240–303 (KKYKDLFDWL…LKETSNLANE (64 aa)). Positions 351-620 (LEYTEKLGAG…RLVTIENEYR (270 aa)) constitute a Protein kinase domain. Residues 357–365 (LGAGSSGKV) and K378 each bind ATP. D472 acts as the Proton acceptor in catalysis.

It belongs to the protein kinase superfamily. TKL Ser/Thr protein kinase family. In terms of assembly, interacts with F-actin. In terms of processing, autophosphorylated.

The protein resides in the cytoplasm. Its subcellular location is the cytoskeleton. It catalyses the reaction L-seryl-[protein] + ATP = O-phospho-L-seryl-[protein] + ADP + H(+). It carries out the reaction L-threonyl-[protein] + ATP = O-phospho-L-threonyl-[protein] + ADP + H(+). Its function is as follows. May be involved in cortical F-actin organization and resistance to osmotic stress. Activated upon cell detachment, in vitro. In Dictyostelium discoideum (Social amoeba), this protein is Stress-activated protein kinase alpha (spkA-1).